The chain runs to 417 residues: Serine hydroxymethyltransferase (417 aa).

N6-acetyllysine is present on Lys-54. Residues Leu-121 and 125-127 each bind (6S)-5,6,7,8-tetrahydrofolate; that span reads GHL. Lys-229 carries the N6-(pyridoxal phosphate)lysine modification. An N6-acetyllysine mark is found at Lys-250, Lys-285, and Lys-354. (6S)-5,6,7,8-tetrahydrofolate is bound at residue 355–357; that stretch reads SPF. Lys-375 is modified (N6-acetyllysine).

Belongs to the SHMT family. In terms of assembly, homodimer. Pyridoxal 5'-phosphate is required as a cofactor.

It localises to the cytoplasm. The catalysed reaction is (6R)-5,10-methylene-5,6,7,8-tetrahydrofolate + glycine + H2O = (6S)-5,6,7,8-tetrahydrofolate + L-serine. It functions in the pathway one-carbon metabolism; tetrahydrofolate interconversion. The protein operates within amino-acid biosynthesis; glycine biosynthesis; glycine from L-serine: step 1/1. Catalyzes the reversible interconversion of serine and glycine with tetrahydrofolate (THF) serving as the one-carbon carrier. This reaction serves as the major source of one-carbon groups required for the biosynthesis of purines, thymidylate, methionine, and other important biomolecules. Also exhibits THF-independent aldolase activity toward beta-hydroxyamino acids, producing glycine and aldehydes, via a retro-aldol mechanism. This is Serine hydroxymethyltransferase from Escherichia coli O157:H7.